Here is a 404-residue protein sequence, read N- to C-terminus: S-adenosylmethionine synthase (404 aa).

His18 contributes to the ATP binding site. Residue Asp20 coordinates Mg(2+). Glu46 is a binding site for K(+). Glu59 and Gln102 together coordinate L-methionine. The segment at Gln102–His112 is flexible loop. ATP contacts are provided by residues Asp178–Lys180, Lys249–Phe250, Asp258, Arg264–Lys265, Ala281, and Lys285. L-methionine is bound at residue Asp258. Residue Lys289 participates in L-methionine binding.

The protein belongs to the AdoMet synthase family. In terms of assembly, homotetramer; dimer of dimers. Mg(2+) serves as cofactor. The cofactor is K(+).

It is found in the cytoplasm. It catalyses the reaction L-methionine + ATP + H2O = S-adenosyl-L-methionine + phosphate + diphosphate. It functions in the pathway amino-acid biosynthesis; S-adenosyl-L-methionine biosynthesis; S-adenosyl-L-methionine from L-methionine: step 1/1. Catalyzes the formation of S-adenosylmethionine (AdoMet) from methionine and ATP. The overall synthetic reaction is composed of two sequential steps, AdoMet formation and the subsequent tripolyphosphate hydrolysis which occurs prior to release of AdoMet from the enzyme. The protein is S-adenosylmethionine synthase of Rhodococcus opacus (strain B4).